The chain runs to 254 residues: Glutaredoxin domain-containing cysteine-rich protein 2 (254 aa).

A compositionally biased stretch (basic and acidic residues) spans 1-16 (MEDSEKKLNQKSDDKP). 2 disordered regions span residues 1–20 (MEDS…RKVR) and 161–183 (GEND…PLPE).

It belongs to the GRXCR2 family. Interacts with TPRN; the interaction restricts TPRN to the stereocilum basal region. Expressed in sensory hair cells in the cochlea and vestibular organ.

The protein resides in the cell projection. It is found in the stereocilium. Required for hearing. Plays a role in maintaining cochlear stereocilia bundles that are involved in sound detection. Ensures the restriction of TPRN to the basal region of stereocilia in hair cells. In Mus musculus (Mouse), this protein is Glutaredoxin domain-containing cysteine-rich protein 2 (Grxcr2).